We begin with the raw amino-acid sequence, 342 residues long: Serpentine receptor class r-10 (342 aa).

Over 1–11 the chain is Extracellular; it reads MTGELWLTLVD. Residues 12–32 form a helical membrane-spanning segment; that stretch reads TADIVGFSMTFCVNIVLLFLL. Over 33–38 the chain is Cytoplasmic; that stretch reads KNRGKN. The helical transmembrane segment at 39–59 threads the bilayer; it reads LGTYKHLMAFFSVFSIFYAII. Over 60 to 92 the chain is Extracellular; sequence ESILRPIMHIENATFFLISRKRFNYSTRLGKIN. Asn-71 and Asn-83 each carry an N-linked (GlcNAc...) asparagine glycan. Residues 93 to 113 form a helical membrane-spanning segment; it reads SAFYCACFATSFVVSGVHFVY. At 114–131 the chain is on the cytoplasmic side; the sequence is RFFASCKPHLLRSFNMPY. The helical transmembrane segment at 132 to 152 threads the bilayer; sequence LLLWPLGCSIPVMMWASVSYF. At 153 to 202 the chain is on the extracellular side; the sequence is LYPDTAFTEAAVTNVLNTHYHSIKKDNVSYIAYVYYQYDENGVRYVYLKN. Residue Asn-179 is glycosylated (N-linked (GlcNAc...) asparagine). Residues 203–223 traverse the membrane as a helical segment; sequence LLGCFVHYFVMSATFVVMFIC. The Cytoplasmic segment spans residues 224–257; that stretch reads GYLTWKTMRKHKTASDRTRQLQKQLFKALVLQTL. The chain crosses the membrane as a helical span at residues 258–278; the sequence is IPTIFMYAPTGVMFIAPFFSI. The Extracellular segment spans residues 279–285; sequence NLNANAN. Residues 286-306 traverse the membrane as a helical segment; it reads FIVFCSFLYPGLDPLILILII. The Cytoplasmic segment spans residues 307-342; the sequence is RDFRQTVFKFFCLRKKNSVDESRSTTRANMSQVATH.

Belongs to the nematode receptor-like protein str family. In terms of assembly, interacts with odr-4.

It localises to the cell projection. The protein resides in the cilium membrane. In terms of biological role, an odorant receptor which affects chemotaxis to the volatile odorant diacetyl. Specifies AWA neuronal cell fate via the odr-7 pathway. The protein is Serpentine receptor class r-10 of Caenorhabditis briggsae.